The following is a 273-amino-acid chain: DNA repair protein RecO (273 aa).

The protein belongs to the RecO family.

Involved in DNA repair and RecF pathway recombination. The sequence is that of DNA repair protein RecO from Mycolicibacterium gilvum (strain PYR-GCK) (Mycobacterium gilvum (strain PYR-GCK)).